The chain runs to 113 residues: Eukaryotic translation initiation factor 1b (113 aa).

An N-acetylserine modification is found at Ser2. Ser9 carries the post-translational modification Phosphoserine.

It belongs to the SUI1 family.

Functionally, probably involved in translation. In Homo sapiens (Human), this protein is Eukaryotic translation initiation factor 1b (EIF1B).